Consider the following 396-residue polypeptide: THAP domain-containing protein 5 (396 aa).

A THAP-type zinc finger spans residues 2 to 85; the sequence is MPRYCAAICC…LKQTAVPTIF (84 aa). Positions 86 to 113 are disordered; that stretch reads SLPEDNQGKDPSKKKSQKKNLEDEKEVC. Residues 91–113 show a composition bias toward basic and acidic residues; it reads NQGKDPSKKKSQKKNLEDEKEVC. Positions 322–325 match the HCFC1-binding motif (HBM) motif; the sequence is EHSY. Residues 349-382 are a coiled coil; sequence LELKEQQTLGRLKSLEALVRQLKQENWLSEENVK.

Interacts with HTRA2; under apoptotic conditions. Interacts with ABRAXAS2. In terms of processing, cleaved by HTRA2 during apoptosis.

The protein resides in the nucleus. In terms of biological role, has sequence-specific DNA-binding activity and can function as transcriptional repressor (in vitro). May be a regulator of cell cycle: THAP5 overexpression in human cell lines causes cell cycle arrest at G2/M phase. This chain is THAP domain-containing protein 5 (THAP5), found in Macaca fascicularis (Crab-eating macaque).